The sequence spans 1317 residues: DNA-directed RNA polymerase subunit beta' (1317 aa).

Zn(2+) contacts are provided by Cys-214, Cys-286, Cys-293, and Cys-296. A disordered region spans residues 1279–1317 (RAYAGTQLSQDDEEFEETYDTDEDDFDMDDDDDFGDDED). Over residues 1288 to 1317 (QDDEEFEETYDTDEDDFDMDDDDDFGDDED) the composition is skewed to acidic residues.

This sequence belongs to the RNA polymerase beta' chain family. RpoC2 subfamily. As to quaternary structure, in cyanobacteria the RNAP catalytic core is composed of 2 alpha, 1 beta, 1 beta', 1 gamma and 1 omega subunit. When a sigma factor is associated with the core the holoenzyme is formed, which can initiate transcription. Zn(2+) is required as a cofactor.

It catalyses the reaction RNA(n) + a ribonucleoside 5'-triphosphate = RNA(n+1) + diphosphate. Its function is as follows. DNA-dependent RNA polymerase catalyzes the transcription of DNA into RNA using the four ribonucleoside triphosphates as substrates. This chain is DNA-directed RNA polymerase subunit beta', found in Synechocystis sp. (strain ATCC 27184 / PCC 6803 / Kazusa).